Here is a 112-residue protein sequence, read N- to C-terminus: Nucleoid-associated protein CA_C0126 (112 aa).

Residues 93–102 (EEETSGEMKK) are compositionally biased toward basic and acidic residues. A disordered region spans residues 93-112 (EEETSGEMKKLTGGLNIPGL).

The protein belongs to the YbaB/EbfC family. In terms of assembly, homodimer.

The protein localises to the cytoplasm. It is found in the nucleoid. Functionally, binds to DNA and alters its conformation. May be involved in regulation of gene expression, nucleoid organization and DNA protection. The sequence is that of Nucleoid-associated protein CA_C0126 from Clostridium acetobutylicum (strain ATCC 824 / DSM 792 / JCM 1419 / IAM 19013 / LMG 5710 / NBRC 13948 / NRRL B-527 / VKM B-1787 / 2291 / W).